The chain runs to 69 residues: MSFNLRGAVLANVSGNTQDQLQETIVDAIQSGEEKMLPGLGVLFEVIWKNADENEKHEMLETLEQGLKK.

Belongs to the SspI family.

Its subcellular location is the spore core. In Bacillus anthracis (strain A0248), this protein is Small, acid-soluble spore protein I.